The primary structure comprises 173 residues: Dirigent protein 8 (173 aa).

Positions 1-22 (MTNLILIFAAQILLFYAVASVG) are cleaved as a signal peptide. 3 N-linked (GlcNAc...) asparagine glycosylation sites follow: Asn-69, Asn-90, and Asn-125.

It belongs to the plant dirigent protein family. Homodimer.

It localises to the secreted. The protein resides in the extracellular space. Its subcellular location is the apoplast. In terms of biological role, dirigent proteins impart stereoselectivity on the phenoxy radical-coupling reaction, yielding optically active lignans from two molecules of coniferyl alcohol in the biosynthesis of lignans, flavonolignans, and alkaloids and thus plays a central role in plant secondary metabolism. This Arabidopsis thaliana (Mouse-ear cress) protein is Dirigent protein 8 (DIR8).